The primary structure comprises 260 residues: 3-oxoadipate CoA-transferase subunit B (260 aa).

Residue Glu-51 is part of the active site.

This sequence belongs to the 3-oxoacid CoA-transferase subunit B family. In terms of assembly, heterotetramer composed of 2 A and 2 B subunits.

The enzyme catalyses 3-oxoadipate + succinyl-CoA = 3-oxoadipyl-CoA + succinate. The protein operates within aromatic compound metabolism; beta-ketoadipate pathway; acetyl-CoA and succinyl-CoA from 3-oxoadipate: step 1/2. The sequence is that of 3-oxoadipate CoA-transferase subunit B (catJ) from Pseudomonas knackmussii (strain DSM 6978 / CCUG 54928 / LMG 23759 / B13).